Here is a 487-residue protein sequence, read N- to C-terminus: Lysophospholipid acyltransferase 5 (487 aa).

N-acetylalanine is present on Ala2. The next 4 helical transmembrane spans lie at 44-64 (LIFS…YLFY), 84-104 (FNFG…FLIL), 111-131 (VTAV…GYYY), and 180-200 (GVPS…FLVG). Asn225 carries N-linked (GlcNAc...) asparagine glycosylation. The next 2 membrane-spanning stretches (helical) occupy residues 236–256 (LGLV…DDYL) and 285–305 (VTCW…FNGF). Residues Asn308 and Asn331 are each glycosylated (N-linked (GlcNAc...) asparagine). Active-site residues include Asn338 and His374. 3 consecutive transmembrane segments (helical) span residues 364–384 (GLSL…LICF), 422–442 (LVQQ…FCLF), and 453–473 (SIYF…PYIH). The short motif at 484 to 487 (KKRE) is the Di-lysine motif element.

Belongs to the membrane-bound acyltransferase family. Detected ubiquitously, with high expression levels in small intestine, brown adipose tissue, liver, kidney and testis. Expressed in liver and both proximal and distal small intestine (at protein level). Expressed in peritoneal macrophages.

The protein localises to the endoplasmic reticulum membrane. It carries out the reaction a 1-acyl-sn-glycero-3-phosphocholine + an acyl-CoA = a 1,2-diacyl-sn-glycero-3-phosphocholine + CoA. The catalysed reaction is a 1-acyl-sn-glycero-3-phosphoethanolamine + an acyl-CoA = a 1,2-diacyl-sn-glycero-3-phosphoethanolamine + CoA. It catalyses the reaction a 1-acyl-sn-glycero-3-phospho-L-serine + an acyl-CoA = a 1,2-diacyl-sn-glycero-3-phospho-L-serine + CoA. The enzyme catalyses (9Z,12Z)-octadecadienoyl-CoA + a 1-acyl-sn-glycero-3-phosphocholine = 1-acyl-2-(9Z,12Z)-octadecadienoyl-sn-glycero-3-phosphocholine + CoA. It carries out the reaction (5Z,8Z,11Z,14Z)-eicosatetraenoyl-CoA + a 1-acyl-sn-glycero-3-phosphocholine = 1-acyl-2-(5Z,8Z,11Z,14Z-eicosatetraenoyl)-sn-glycero-3-phosphocholine + CoA. The catalysed reaction is dodecanoyl-CoA + 1-hexadecanoyl-sn-glycero-3-phosphocholine = 1-hexadecanoyl-2-dodecanoyl-sn-glycero-3-phosphocholine + CoA. It catalyses the reaction octadecanoyl-CoA + 1-hexadecanoyl-sn-glycero-3-phosphocholine = 1-hexadecanoyl-2-octadecanoyl-sn-glycero-3-phosphocholine + CoA. The enzyme catalyses 1-dodecanoyl-sn-glycero-3-phosphocholine + hexadecanoyl-CoA = 1-dodecanoyl-2-hexadecanoyl-sn-glycero-3-phosphocholine + CoA. It carries out the reaction 1-tetradecanoyl-sn-glycero-3-phosphocholine + hexadecanoyl-CoA = 1-tetradecanoyl-2-hexadecanoyl-sn-glycero-3-phosphocholine + CoA. The catalysed reaction is 1-hexadecanoyl-sn-glycero-3-phosphocholine + hexadecanoyl-CoA = 1,2-dihexadecanoyl-sn-glycero-3-phosphocholine + CoA. It catalyses the reaction 1-octadecanoyl-sn-glycero-3-phosphocholine + hexadecanoyl-CoA = 1-octadecanoyl-2-hexadecanoyl-sn-glycero-3-phosphocholine + CoA. The enzyme catalyses 1-(9Z-octadecenoyl)-sn-glycero-3-phosphocholine + hexadecanoyl-CoA = 1-(9Z-octadecenoyl)-2-hexadecanoyl-sn-glycero-3-phosphocholine + CoA. It carries out the reaction (9Z)-hexadecenoyl-CoA + 1-hexadecanoyl-sn-glycero-3-phosphocholine = 1-hexadecanoyl-2-(9Z-hexadecenoyl)-sn-glycero-3-phosphocholine + CoA. The catalysed reaction is 1-hexadecanoyl-sn-glycero-3-phosphocholine + (9Z)-octadecenoyl-CoA = 1-hexadecanoyl-2-(9Z-octadecenoyl)-sn-glycero-3-phosphocholine + CoA. It catalyses the reaction (9Z,12Z)-octadecadienoyl-CoA + 1-hexadecanoyl-sn-glycero-3-phosphocholine = 1-hexadecanoyl-2-(9Z,12Z-octadecadienoyl)-sn-glycero-3-phosphocholine + CoA. The enzyme catalyses 1-dodecanoyl-sn-glycero-3-phosphocholine + (5Z,8Z,11Z,14Z)-eicosatetraenoyl-CoA = 1-dodecanoyl-2-(5Z,8Z,11Z,14Z)-eicosatetraenoyl-sn-glycero-3-phosphocholine + CoA. It carries out the reaction (5Z,8Z,11Z,14Z)-eicosatetraenoyl-CoA + 1-hexadecanoyl-sn-glycero-3-phosphocholine = 1-hexadecanoyl-2-(5Z,8Z,11Z,14Z-eicosatetraenoyl)-sn-glycero-3-phosphocholine + CoA. The catalysed reaction is 1-octadecanoyl-sn-glycero-3-phosphocholine + (5Z,8Z,11Z,14Z)-eicosatetraenoyl-CoA = 1-octadecanoyl-2-(5Z,8Z,11Z,14Z-eicosatetraenoyl)-sn-glycero-3-phosphocholine + CoA. It catalyses the reaction 1-eicosanoyl-sn-glycero-3-phosphocholine + (5Z,8Z,11Z,14Z)-eicosatetraenoyl-CoA = 1-eicosanoyl-2-(5Z,8Z,11Z,14Z)-eicosatetraenoyl-sn-glycero-3-phosphocholine + CoA. The enzyme catalyses 1-(9Z-octadecenoyl)-sn-glycero-3-phosphocholine + (9Z)-octadecenoyl-CoA = 1,2-di-(9Z-octadecenoyl)-sn-glycero-3-phosphocholine + CoA. It carries out the reaction 1-(9Z-octadecenoyl)-sn-glycero-3-phosphocholine + (9Z,12Z)-octadecadienoyl-CoA = 1-(9Z)-octadecenoyl-2-(9Z,12Z)-octadecadienoyl-sn-glycero-3-phosphocholine + CoA. The catalysed reaction is 1-(9Z-octadecenoyl)-sn-glycero-3-phosphocholine + (5Z,8Z,11Z,14Z)-eicosatetraenoyl-CoA = 1-(9Z)-octadecenoyl-2-(5Z,8Z,11Z,14Z)-icosatetraenoyl-sn-glycero-3-phosphocholine + CoA. It catalyses the reaction a 1-acyl-sn-glycero-3-phosphoethanolamine + (9Z,12Z)-octadecadienoyl-CoA = 1-acyl-2-(9Z,12Z)-octadecadienoyl-sn-glycero-3-phosphoethanolamine + CoA. The enzyme catalyses 1-(9Z-octadecenoyl)-sn-glycero-3-phosphoethanolamine + (9Z,12Z)-octadecadienoyl-CoA = 1-(9Z)-octadecenoyl-2-(9Z,12Z)-octadecadienoyl-sn-glycero-3-phosphoethanolamine + CoA. It carries out the reaction 1-(10Z-heptadecenoyl)-sn-glycero-3-phosphoethanolamine + (9Z,12Z)-octadecadienoyl-CoA = 1-(10Z-heptadecenoyl)-2-(9Z,12Z-octadecadienoyl)-sn-glycero-3-phosphoethanolamine + CoA. The catalysed reaction is a 1-acyl-sn-glycero-3-phosphoethanolamine + (5Z,8Z,11Z,14Z)-eicosatetraenoyl-CoA = 1-acyl-2-(5Z,8Z,11Z,14Z)-eicosatetraenoyl-sn-glycero-3-phosphoethanolamine + CoA. It catalyses the reaction 1-hexadecanoyl-sn-glycero-3-phosphoethanolamine + (5Z,8Z,11Z,14Z)-eicosatetraenoyl-CoA = 1-hexadecanoyl-2-(5Z,8Z,11Z,14Z-eicosatetraenoyl)-sn-glycero-3-phosphoethanolamine + CoA. The enzyme catalyses 1-(9Z-octadecenoyl)-sn-glycero-3-phosphoethanolamine + (5Z,8Z,11Z,14Z)-eicosatetraenoyl-CoA = 1-(9Z)-octadecenoyl-2-(5Z,8Z,11Z,14Z)-eicosatetraenoyl-sn-glycero-3-phosphoethanolamine + CoA. It carries out the reaction 1-(10Z-heptadecenoyl)-sn-glycero-3-phosphoethanolamine + (5Z,8Z,11Z,14Z)-eicosatetraenoyl-CoA = 1-(10Z-heptadecenoyl)-2-(5Z,8Z,11Z,14Z-eicosatetraenoyl)-sn-glycero-3-phosphoethanolamine + CoA. The catalysed reaction is a 1-O-(1Z-alkenyl)-sn-glycero-3-phosphoethanolamine + (5Z,8Z,11Z,14Z)-eicosatetraenoyl-CoA = 1-O-(1Z)-alkenyl-2-(5Z,8Z,11Z,14Z)-eicosatetraenoyl-sn-glycero-3-phosphoethanolamine + CoA. It catalyses the reaction a 1-acyl-sn-glycero-3-phospho-L-serine + (9Z,12Z)-octadecadienoyl-CoA = 1-acyl-2-(9Z,12Z-octadecadienoyl)-sn-glycero-3-phospho-L-serine + CoA. The enzyme catalyses a 1-acyl-sn-glycero-3-phospho-L-serine + (5Z,8Z,11Z,14Z)-eicosatetraenoyl-CoA = 1-acyl-2-(5Z,8Z,11Z,14Z-eicosatetraenoyl)-sn-glycero-3-phospho-L-serine + CoA. It carries out the reaction 1-hexadecanoyl-sn-glycero-3-phospho-L-serine + (9Z)-octadecenoyl-CoA = 1-hexadecanoyl-2-(9Z-octadecenoyl)-sn-glycero-3-phospho-L-serine + CoA. The catalysed reaction is 1-(9Z-octadecenoyl)-sn-glycero-3-phospho-L-serine + (9Z)-octadecenoyl-CoA = 1,2-di-(9Z)-octadecenoyl-sn-glycero-3-phospho-L-serine + CoA. It catalyses the reaction 1-hexadecanoyl-sn-glycero-3-phospho-L-serine + (9Z,12Z)-octadecadienoyl-CoA = 1-hexadecanoyl-2-(9Z,12Z-octadecadienoyl)-sn-glycero-3-phospho-L-serine + CoA. The enzyme catalyses 1-(9Z-octadecenoyl)-sn-glycero-3-phospho-L-serine + (9Z,12Z)-octadecadienoyl-CoA = 1-(9Z-octadecenoyl)-2-(9Z,12Z-octadienoyl)-sn-glycero-3-phospho-L-serine + CoA. It carries out the reaction 1-hexadecanoyl-sn-glycero-3-phospho-L-serine + (5Z,8Z,11Z,14Z)-eicosatetraenoyl-CoA = 1-hexadecanoyl-2-(5Z,8Z,11Z,14Z-eicosatetraenoyl)-sn-glycero-3-phospho-L-serine + CoA. The catalysed reaction is 1-(9Z-octadecenoyl)-sn-glycero-3-phospho-L-serine + (5Z,8Z,11Z,14Z)-eicosatetraenoyl-CoA = 1-(9Z-octadecenoyl)-2-(5Z,8Z,11Z,14Z-eicosatetraenoyl)-sn-glycero-3-phospho-L-serine + CoA. It participates in lipid metabolism; phospholipid metabolism. In terms of biological role, lysophospholipid O-acyltransferase (LPLAT) that catalyzes the reacylation step of the phospholipid remodeling process also known as the Lands cycle. Catalyzes transfer of the fatty acyl chain from fatty acyl-CoA to 1-acyl lysophospholipid to form various classes of phospholipids. Converts 1-acyl lysophosphatidylcholine (LPC) into phosphatidylcholine (PC) (LPCAT activity), 1-acyl lysophosphatidylserine (LPS) into phosphatidylserine (PS) (LPSAT activity) and 1-acyl lysophosphatidylethanolamine (LPE) into phosphatidylethanolamine (PE) (LPEAT activity). Favors polyunsaturated fatty acyl-CoAs as acyl donors compared to saturated fatty acyl-CoAs. Has higher activity for LPC acyl acceptors compared to LPEs and LPSs. Can also transfer the fatty acyl chain from fatty acyl-CoA to 1-O-alkyl lysophospholipid or 1-O-alkenyl lysophospholipid with lower efficiency. Acts as a major LPC O-acyltransferase in liver and intestine. As a component of the liver X receptor/NR1H3 or NR1H2 signaling pathway, mainly catalyzes the incorporation of arachidonate into PCs of endoplasmic reticulum (ER) membranes, increasing membrane dynamics and enabling triacylglycerols transfer to nascent very low-density lipoprotein (VLDL) particles. Promotes processing of sterol regulatory protein SREBF1 in hepatocytes, likely by facilitating the translocation of SREBF1-SCAP complex from ER to the Golgi apparatus. Participates in mechanisms by which the liver X receptor/NR1H3 or NR1H2 signaling pathway counteracts lipid-induced ER stress response and inflammation. Down-regulates hepatic inflammation by limiting arachidonic acid availability for synthesis of inflammatory eicosanoids, such as prostaglandins. In enterocytes, acts as a component of a gut-brain feedback loop that coordinates dietary lipid absorption and food intake. Regulates the abundance of PCs containing linoleate and arachidonate in enterocyte membranes, enabling passive diffusion of fatty acids and cholesterol across the membrane for efficient chylomicron assembly. In the intestinal crypt, acts as a component of dietary-responsive phospholipid-cholesterol axis, regulating the biosynthesis of cholesterol and its mitogenic effects on intestinal stem cells. The polypeptide is Lysophospholipid acyltransferase 5 (Lpcat3) (Mus musculus (Mouse)).